Here is a 258-residue protein sequence, read N- to C-terminus: Imidazole glycerol phosphate synthase subunit HisF (258 aa).

Active-site residues include D11 and D130.

Belongs to the HisA/HisF family. In terms of assembly, heterodimer of HisH and HisF.

Its subcellular location is the cytoplasm. It catalyses the reaction 5-[(5-phospho-1-deoxy-D-ribulos-1-ylimino)methylamino]-1-(5-phospho-beta-D-ribosyl)imidazole-4-carboxamide + L-glutamine = D-erythro-1-(imidazol-4-yl)glycerol 3-phosphate + 5-amino-1-(5-phospho-beta-D-ribosyl)imidazole-4-carboxamide + L-glutamate + H(+). Its pathway is amino-acid biosynthesis; L-histidine biosynthesis; L-histidine from 5-phospho-alpha-D-ribose 1-diphosphate: step 5/9. In terms of biological role, IGPS catalyzes the conversion of PRFAR and glutamine to IGP, AICAR and glutamate. The HisF subunit catalyzes the cyclization activity that produces IGP and AICAR from PRFAR using the ammonia provided by the HisH subunit. The protein is Imidazole glycerol phosphate synthase subunit HisF of Bradyrhizobium sp. (strain ORS 278).